The chain runs to 535 residues: Signal transduction histidine-protein kinase AfsQ2 (535 aa).

Residues 1-30 lie on the Cytoplasmic side of the membrane; the sequence is MTREHQGGTRGLAAARKGFWSGLRFTSLRL. Residues 31–52 form a helical membrane-spanning segment; it reads RLVLVFGLVALTAAVSASGIAY. Over 53-198 the chain is Extracellular; it reads WLNREAVLTR…SLEPEAKDLN (146 aa). Residues 199–219 form a helical membrane-spanning segment; sequence SLAWSLGIATALALLGSALLA. Residues 220 to 535 lie on the Cytoplasmic side of the membrane; the sequence is QALATTVLKP…DRGKDAKGQV (316 aa). Residues 224-276 enclose the HAMP domain; that stretch reads TTVLKPVHRLGVAARRLGEGKLDTRLRVSGTDELADLSRTFNSAAENLEKRVA. A Histidine kinase domain is found at 291–510; sequence DMSHELRTPL…VFTLRLPQDP (220 aa). Phosphohistidine is present on H294. The tract at residues 493–535 is disordered; that stretch reads ENAPEGGAVFTLRLPQDPSPPADEDGGPDEETEDRGKDAKGQV. Over residues 514–525 the composition is skewed to acidic residues; it reads ADEDGGPDEETE. The segment covering 526–535 has biased composition (basic and acidic residues); that stretch reads DRGKDAKGQV.

The protein resides in the cell membrane. The catalysed reaction is ATP + protein L-histidine = ADP + protein N-phospho-L-histidine.. In terms of biological role, forms part of a two-component regulatory system AfsQ1/AfsQ2 involved in secondary metabolism. May activate AfsQ1 by phosphorylation. This Streptomyces coelicolor (strain ATCC BAA-471 / A3(2) / M145) protein is Signal transduction histidine-protein kinase AfsQ2 (afsQ2).